A 281-amino-acid chain; its full sequence is Phosphatidylglycerol--prolipoprotein diacylglyceryl transferase (281 aa).

3 helical membrane-spanning segments follow: residues 11-31, 57-77, and 89-109; these read IIFTIGPVSARWYGFMYVISF, LLYSIFLGSCIGGRIGYIIFY, and VFYIWEGGMSFHGGLIGAIIV. R140 lines the a 1,2-diacyl-sn-glycero-3-phospho-(1'-sn-glycerol) pocket. 3 helical membrane-spanning segments follow: residues 194–214, 222–242, and 255–275; these read PTQLYEFFLEGILLFFIIYFF, GSISGLFLIFYGLFRIFIEFF, and IITMGQILSLPMIIAGLIIMY.

It belongs to the Lgt family.

It is found in the cell inner membrane. The catalysed reaction is L-cysteinyl-[prolipoprotein] + a 1,2-diacyl-sn-glycero-3-phospho-(1'-sn-glycerol) = an S-1,2-diacyl-sn-glyceryl-L-cysteinyl-[prolipoprotein] + sn-glycerol 1-phosphate + H(+). Its pathway is protein modification; lipoprotein biosynthesis (diacylglyceryl transfer). Catalyzes the transfer of the diacylglyceryl group from phosphatidylglycerol to the sulfhydryl group of the N-terminal cysteine of a prolipoprotein, the first step in the formation of mature lipoproteins. The chain is Phosphatidylglycerol--prolipoprotein diacylglyceryl transferase from Buchnera aphidicola subsp. Acyrthosiphon pisum (strain APS) (Acyrthosiphon pisum symbiotic bacterium).